The sequence spans 941 residues: Probable lipoxygenase 8, chloroplastic (941 aa).

2 disordered regions span residues 1–22 (MLRP…SSSS) and 45–68 (LIAG…VVRC). The transit peptide at 1-67 (MLRPQLNPSS…QQGRQRVVVR (67 aa)) directs the protein to the chloroplast. Positions 100–236 (AVATIKVTVE…SIDEGTPGKR (137 aa)) constitute a PLAT domain. Residues 242 to 941 (AYLPGQTPAG…GMGIPNSTSI (700 aa)) enclose the Lipoxygenase domain. 2 disordered regions span residues 255–274 (YREE…READ) and 288–331 (NPDS…RKGN). The segment covering 319 to 331 (SKKDPKSETRKGN) has biased composition (basic and acidic residues). Residues histidine 598, histidine 603, histidine 790, asparagine 794, and isoleucine 941 each contribute to the Fe cation site.

The protein belongs to the lipoxygenase family. It depends on Fe cation as a cofactor.

Its subcellular location is the plastid. The protein resides in the chloroplast. The enzyme catalyses (9Z,12Z)-octadecadienoate + O2 = (13S)-hydroperoxy-(9Z,11E)-octadecadienoate. The catalysed reaction is (9Z,12Z,15Z)-octadecatrienoate + O2 = (13S)-hydroperoxy-(9Z,11E,15Z)-octadecatrienoate. It participates in lipid metabolism; oxylipin biosynthesis. Plant lipoxygenase may be involved in a number of diverse aspects of plant physiology including growth and development, pest resistance, and senescence or responses to wounding. It catalyzes the hydroperoxidation of lipids containing a cis,cis-1,4-pentadiene structure. This Oryza sativa subsp. japonica (Rice) protein is Probable lipoxygenase 8, chloroplastic (CM-LOX2).